The primary structure comprises 146 residues: Ribosome maturation factor RimP (146 aa).

The protein belongs to the RimP family.

Its subcellular location is the cytoplasm. Required for maturation of 30S ribosomal subunits. The protein is Ribosome maturation factor RimP of Helicobacter pylori (strain HPAG1).